The sequence spans 246 residues: Zinc import ATP-binding protein ZnuC (246 aa).

The ABC transporter domain occupies 24 to 243; it reads LKIENLALAY…RTLNEIFSSY (220 aa). 56–63 lines the ATP pocket; sequence GPNGGGKT.

This sequence belongs to the ABC transporter superfamily. Zinc importer (TC 3.A.1.15.5) family. As to quaternary structure, the complex is composed of two ATP-binding proteins (ZnuC), two transmembrane proteins (ZnuB) and a solute-binding protein (ZnuA).

The protein resides in the cell membrane. It catalyses the reaction Zn(2+)(out) + ATP(in) + H2O(in) = Zn(2+)(in) + ADP(in) + phosphate(in) + H(+)(in). Part of the ABC transporter complex ZnuABC involved in zinc import. Responsible for energy coupling to the transport system. This Wolbachia pipientis wMel protein is Zinc import ATP-binding protein ZnuC.